The primary structure comprises 133 residues: uncharacterized protein (133 aa).

This is an uncharacterized protein from Mycobacterium tuberculosis (strain CDC 1551 / Oshkosh).